Reading from the N-terminus, the 209-residue chain is Outer-membrane lipoprotein carrier protein (209 aa).

Residues 1–24 form the signal peptide; it reads MTRYVISRLSAIALLALAPALALA.

This sequence belongs to the LolA family. As to quaternary structure, monomer.

The protein localises to the periplasm. Its function is as follows. Participates in the translocation of lipoproteins from the inner membrane to the outer membrane. Only forms a complex with a lipoprotein if the residue after the N-terminal Cys is not an aspartate (The Asp acts as a targeting signal to indicate that the lipoprotein should stay in the inner membrane). The protein is Outer-membrane lipoprotein carrier protein of Bordetella avium (strain 197N).